The primary structure comprises 290 residues: Small ribosomal subunit biogenesis GTPase RsgA (290 aa).

Positions Lys62 to Leu213 constitute a CP-type G domain. GTP-binding positions include Ser111 to Asp114 and Gly156 to Thr164. Cys237, Cys242, His244, and Cys250 together coordinate Zn(2+).

The protein belongs to the TRAFAC class YlqF/YawG GTPase family. RsgA subfamily. In terms of assembly, monomer. Associates with 30S ribosomal subunit, binds 16S rRNA. Zn(2+) is required as a cofactor.

The protein resides in the cytoplasm. Functionally, one of several proteins that assist in the late maturation steps of the functional core of the 30S ribosomal subunit. Helps release RbfA from mature subunits. May play a role in the assembly of ribosomal proteins into the subunit. Circularly permuted GTPase that catalyzes slow GTP hydrolysis, GTPase activity is stimulated by the 30S ribosomal subunit. The sequence is that of Small ribosomal subunit biogenesis GTPase RsgA from Streptococcus agalactiae serotype III (strain NEM316).